Consider the following 102-residue polypeptide: Small ribosomal subunit protein uS10 (102 aa).

This sequence belongs to the universal ribosomal protein uS10 family. As to quaternary structure, part of the 30S ribosomal subunit.

Involved in the binding of tRNA to the ribosomes. This chain is Small ribosomal subunit protein uS10, found in Rhodospirillum rubrum (strain ATCC 11170 / ATH 1.1.1 / DSM 467 / LMG 4362 / NCIMB 8255 / S1).